The primary structure comprises 732 residues: Elongation factor 2 (732 aa).

Residues Glu-19–Ile-260 form the tr-type G domain. GTP-binding positions include Ala-28–Thr-35, Asp-94–His-98, and Asn-148–Asp-151. Position 597 is a diphthamide (His-597).

Belongs to the TRAFAC class translation factor GTPase superfamily. Classic translation factor GTPase family. EF-G/EF-2 subfamily.

It localises to the cytoplasm. Its function is as follows. Catalyzes the GTP-dependent ribosomal translocation step during translation elongation. During this step, the ribosome changes from the pre-translocational (PRE) to the post-translocational (POST) state as the newly formed A-site-bound peptidyl-tRNA and P-site-bound deacylated tRNA move to the P and E sites, respectively. Catalyzes the coordinated movement of the two tRNA molecules, the mRNA and conformational changes in the ribosome. This is Elongation factor 2 (fusA) from Pyrococcus horikoshii (strain ATCC 700860 / DSM 12428 / JCM 9974 / NBRC 100139 / OT-3).